The sequence spans 388 residues: Dual-specificity RNA methyltransferase RlmN (388 aa).

The active-site Proton acceptor is Glu109. The Radical SAM core domain maps to 115-354; the sequence is EDDRATLCVS…TIVRKTRGDD (240 aa). A disulfide bond links Cys122 and Cys359. [4Fe-4S] cluster contacts are provided by Cys129, Cys133, and Cys136. S-adenosyl-L-methionine is bound by residues 183–184, Ser215, 237–239, and Asn316; these read GE and SLH. Cys359 functions as the S-methylcysteine intermediate in the catalytic mechanism.

This sequence belongs to the radical SAM superfamily. RlmN family. [4Fe-4S] cluster is required as a cofactor.

The protein resides in the cytoplasm. It carries out the reaction adenosine(2503) in 23S rRNA + 2 reduced [2Fe-2S]-[ferredoxin] + 2 S-adenosyl-L-methionine = 2-methyladenosine(2503) in 23S rRNA + 5'-deoxyadenosine + L-methionine + 2 oxidized [2Fe-2S]-[ferredoxin] + S-adenosyl-L-homocysteine. The catalysed reaction is adenosine(37) in tRNA + 2 reduced [2Fe-2S]-[ferredoxin] + 2 S-adenosyl-L-methionine = 2-methyladenosine(37) in tRNA + 5'-deoxyadenosine + L-methionine + 2 oxidized [2Fe-2S]-[ferredoxin] + S-adenosyl-L-homocysteine. Specifically methylates position 2 of adenine 2503 in 23S rRNA and position 2 of adenine 37 in tRNAs. m2A2503 modification seems to play a crucial role in the proofreading step occurring at the peptidyl transferase center and thus would serve to optimize ribosomal fidelity. This Salmonella typhi protein is Dual-specificity RNA methyltransferase RlmN.